Consider the following 72-residue polypeptide: Translational regulator CsrA (72 aa).

Belongs to the CsrA/RsmA family. In terms of assembly, homodimer; the beta-strands of each monomer intercalate to form a hydrophobic core, while the alpha-helices form wings that extend away from the core.

The protein resides in the cytoplasm. A translational regulator that binds mRNA to regulate translation initiation and/or mRNA stability. Usually binds in the 5'-UTR at or near the Shine-Dalgarno sequence preventing ribosome-binding, thus repressing translation. Its main target seems to be the major flagellin gene, while its function is anatagonized by FliW. The protein is Translational regulator CsrA of Clostridium novyi (strain NT).